The primary structure comprises 320 residues: Polyprenyl transferase pyr6 (320 aa).

6 helical membrane passes run 22-42 (KYNCLFAIFPGVWSIFLAAAS), 60-80 (GLAFAYTYLLSGAGMVWNDWI), 101-121 (LATRAAIIWMLVQYAASVWLM), 127-147 (GQNLWTFMLPLTTGIILYPFG), 155-175 (LGIYPQYILGASSALTILPAW), and 186-206 (PDLLAKCLPLCVFLFLWTIYF). Asn-224 carries N-linked (GlcNAc...) asparagine glycosylation. The helical transmembrane segment at 233–253 (YVHGLLLLQAVAVVMVIPWIL) threads the bilayer. N-linked (GlcNAc...) asparagine glycosylation is present at Asn-256. 2 helical membrane passes run 260–280 (WLWFSWLGVWTAALAEQLYLF) and 296–316 (FALGIWNVLACFVELLLVSGS).

Belongs to the UbiA prenyltransferase family. It depends on Mg(2+) as a cofactor.

The protein resides in the membrane. The catalysed reaction is 4-hydroxy-6-(pyridin-3-yl)-2H-pyran-2-one + (2E,6E)-farnesyl diphosphate = 4-hydroxy-3-[(2E,6E)-farnesyl]-6-(pyridin-3-yl)-2H-pyran-2-one + diphosphate. It participates in secondary metabolite biosynthesis; terpenoid biosynthesis. Its function is as follows. Polyprenyl transferase; part of the gene cluster that mediates the biosynthesis of pyripyropene A, a specific human acyl-coenzyme A:cholesterol acyltransferase 2 inhibitor. The first step of the pathway is the synthesis of nicotinyl-CoA from nicotinic acid by the nicotinic acid-CoA ligase pyr1. Nicotinyl-CoA is then a substrate of polyketide synthase pyr2 to produce 4-hydroxy-6-(3-pyridinyl)-2H-pyran-2-one (HPPO) which is further prenylated by the polyprenyl transferase pyr6 to yield farnesyl-HPPO. The next steps consist of an epoxidation of farnesyl-HPPO to epoxyfarnesyl-HPPO by FAD-dependent monooxygenase pyr5 and a cyclization of the terpenoid portion by the terpene cyclase pyr4 to yield deacetyl-pyripyropene E. The 2 cytochrome P450 monooxygenases pyr3 and pyr9, and the 2 acetyltransferases pyr7 and pyr8 are involved in the conversion of deacetyl-pyripyropene E into pyripyropene A through several cycles of oxidation and acetylation steps. Pyr7 acetylates deacetyl-pyripyropene E to pyripyropene E which is oxidized to 11-deacetyl-pyripyropene O by pyr3, which is in turn acetylated into pyripyropene O by pyr8. Pyripyropene O is then oxidized to deacetyl-pyripyropene A by pyr9. Deacetyl-pyripyropene A is finally acetylated to pyripyropene A by pyr8. In Aspergillus fumigatus (strain ATCC MYA-4609 / CBS 101355 / FGSC A1100 / Af293) (Neosartorya fumigata), this protein is Polyprenyl transferase pyr6.